A 163-amino-acid chain; its full sequence is Secretory-abundant heat soluble protein 53582 (163 aa).

The first 19 residues, 1–19 (MARLFVAVALFGVVAFAAA), serve as a signal peptide directing secretion. Positions 22–51 (EWTGKTWLGSWASTDRAENWEAFVDALGLP) are SAHS-c1. Residues 67–95 (YKQGDKYHHEVSIPSKNFKKAIEYTLGTE) are SAHS-c2. Residues 108–157 (KYTEDGEKLVADVQIPSKNKQIHDIYEVQGDTLTKTYKVGDVVAKRWFTR) form an SAHS-c3 region.

It belongs to the Secretory-abundant heat soluble protein (SAHS) family.

Its subcellular location is the secreted. Functionally, secreted heat soluble protein acting as a molecular shield in water-deficient condition. Tardigrade-specific intrinsically disordered proteins (TDPs) are essential for desiccation tolerance by forming non-crystalline amorphous solids upon desiccation, and this vitrified state mirrors their protective capabilities. In Hypsibius exemplaris (Freshwater tardigrade), this protein is Secretory-abundant heat soluble protein 53582.